The following is a 148-amino-acid chain: Small ribosomal subunit protein uS13 (148 aa).

Residues 128–148 form a disordered region; sequence RGQRTKSTGRRGSTIGVRKKK.

Belongs to the universal ribosomal protein uS13 family. As to quaternary structure, part of the 30S ribosomal subunit. Forms a loose heterodimer with protein S19. Forms two bridges to the 50S subunit in the 70S ribosome.

In terms of biological role, located at the top of the head of the 30S subunit, it contacts several helices of the 16S rRNA. In the 70S ribosome it contacts the 23S rRNA (bridge B1a) and protein L5 of the 50S subunit (bridge B1b), connecting the 2 subunits; these bridges are implicated in subunit movement. The sequence is that of Small ribosomal subunit protein uS13 from Methanococcoides burtonii (strain DSM 6242 / NBRC 107633 / OCM 468 / ACE-M).